A 482-amino-acid polypeptide reads, in one-letter code: MTAKTLYDKLWEMHEVTRRDDGSSLIYIDRHILHEVTSPQAFEGLRLAGRNPWRIDANIATPDHNVPTTRAERQGGLESISDEVSRLQVQTLDENCDDFGILEFKMNDARQGIVHVVGPEQGATLPGMTVVCGDSHTSTHGAFGALAHGIGTSEVEHVLATQCLITKKMKNLQVRVEGTLPFGVTAKDIVLAVIGKIGTAGGNGHALEFAGSAIRALSMEGRMTICNMSIEAGARVGMVAVDEKTIAYVKGRPFAPKGADWDAAVALWSTLVSDPDAHFDTVVELHAEDIKPQVSWGTSPEMVLAIDQHVPDPATEQDPTKRNSIERALKYMGLKANQAITDIRLDRVFIGSCTNSRIEDLRAAAAVAKGRKVASTIKQALVVPGSGLVKAQAEAEGLDKVFLDAGFEWREPGCSMCLAMNPDKLGSGEHCASTSNRNFEGRQGAGGRTHLVSPAMAAAAAVSGHFVDVRELGDSGVGIRDS.

Positions 353, 414, and 417 each coordinate [4Fe-4S] cluster.

The protein belongs to the aconitase/IPM isomerase family. LeuC type 1 subfamily. As to quaternary structure, heterodimer of LeuC and LeuD. It depends on [4Fe-4S] cluster as a cofactor.

It catalyses the reaction (2R,3S)-3-isopropylmalate = (2S)-2-isopropylmalate. It functions in the pathway amino-acid biosynthesis; L-leucine biosynthesis; L-leucine from 3-methyl-2-oxobutanoate: step 2/4. Catalyzes the isomerization between 2-isopropylmalate and 3-isopropylmalate, via the formation of 2-isopropylmaleate. This is 3-isopropylmalate dehydratase large subunit from Xanthomonas oryzae pv. oryzae (strain MAFF 311018).